Consider the following 251-residue polypeptide: tRNA-cytidine(32) 2-sulfurtransferase 2 (251 aa).

The PP-loop motif signature appears at 33–38; that stretch reads SGGKDS. [4Fe-4S] cluster contacts are provided by Cys108, Cys111, and Cys199.

Belongs to the TtcA family. In terms of assembly, homodimer. Requires Mg(2+) as cofactor. [4Fe-4S] cluster is required as a cofactor.

Its subcellular location is the cytoplasm. It catalyses the reaction cytidine(32) in tRNA + S-sulfanyl-L-cysteinyl-[cysteine desulfurase] + AH2 + ATP = 2-thiocytidine(32) in tRNA + L-cysteinyl-[cysteine desulfurase] + A + AMP + diphosphate + H(+). It participates in tRNA modification. Functionally, catalyzes the ATP-dependent 2-thiolation of cytidine in position 32 of tRNA, to form 2-thiocytidine (s(2)C32). The sulfur atoms are provided by the cysteine/cysteine desulfurase (IscS) system. The polypeptide is tRNA-cytidine(32) 2-sulfurtransferase 2 (Francisella tularensis subsp. tularensis (strain FSC 198)).